Reading from the N-terminus, the 527-residue chain is Type II methyltransferase M.XamI (527 aa).

The protein belongs to the N(4)/N(6)-methyltransferase family.

It carries out the reaction a 2'-deoxyadenosine in DNA + S-adenosyl-L-methionine = an N(6)-methyl-2'-deoxyadenosine in DNA + S-adenosyl-L-homocysteine + H(+). A gamma subtype methylase that recognizes the double-stranded sequence 5'-GTCGAC-3', possibly methylates A-5 on both strands, and protects the DNA from cleavage by the XamI endonuclease. The sequence is that of Type II methyltransferase M.XamI from Xanthomonas campestris pv. amaranthicola.